The primary structure comprises 1037 residues: Huntingtin-interacting protein 1 (1037 aa).

The ENTH domain occupies 32–160 (ERESFERTQT…EYHTKNPRFP (129 aa)). Phosphoserine is present on serine 338. A coiled-coil region spans residues 368–644 (VNKDEKDHLI…IQDALNQLEE (277 aa)). Residues 410–491 (SELEADLAEQ…HADLLRKNAE (82 aa)) form a pDED region. Positions 771-1012 (GLDIKQEELG…ELRKKHYELA (242 aa)) constitute an I/LWEQ domain. The important for actin binding stretch occupies residues 867-924 (RWTEGLISASKAVGWGATVMVDAADLVVQGRGKFEELMVCSHEIAASTAQLVAASKVK). The interval 1017–1037 (GWEEGTEASPPTLQEVVTEKE) is disordered.

Belongs to the SLA2 family. In terms of assembly, homodimer. Binds actin. Binds HTT (via N-terminus). This interaction is restricted to the brain. Binds to IFT57. In normal conditions, it poorly interacts with IFT57, HIP1 being strongly associated with HTT. However, in mutant HTT proteins with a long poly-Gln region, interaction between HTT and HIP1 is inhibited, promoting the interaction between HIP1 and IFT57. Interacts with CLTB (via N-terminus). Interacts (via coiled coil domain) with AR. Interacts with AP2A1, AP2A2, CLTC and HIP1R. Interacts with GRIA1, GRIN2A and GRIN2B. As to expression, ubiquitously expressed with the highest level in brain. Expression is up-regulated in prostate and colon cancer.

It localises to the cytoplasm. The protein localises to the nucleus. Its subcellular location is the endomembrane system. It is found in the cytoplasmic vesicle. The protein resides in the clathrin-coated vesicle membrane. Plays a role in clathrin-mediated endocytosis and trafficking. Involved in regulating AMPA receptor trafficking in the central nervous system in an NMDA-dependent manner. Regulates presynaptic nerve terminal activity. Enhances androgen receptor (AR)-mediated transcription. May act as a proapoptotic protein that induces cell death by acting through the intrinsic apoptosis pathway. Binds 3-phosphoinositides (via ENTH domain). May act through the ENTH domain to promote cell survival by stabilizing receptor tyrosine kinases following ligand-induced endocytosis. May play a functional role in the cell filament networks. May be required for differentiation, proliferation, and/or survival of somatic and germline progenitors. In Homo sapiens (Human), this protein is Huntingtin-interacting protein 1 (HIP1).